A 271-amino-acid chain; its full sequence is Putative carboxymethylenebutenolidase (271 aa).

Residues Cys-147, Asp-204, and His-236 contribute to the active site.

The protein belongs to the dienelactone hydrolase family.

The enzyme catalyses 2-(5-oxo-2,5-dihydrofuran-2-ylidene)acetate + H2O = 4-oxohex-2-enedioate + H(+). The polypeptide is Putative carboxymethylenebutenolidase (ysgA) (Escherichia coli (strain K12)).